The primary structure comprises 321 residues: Lipoyl synthase (321 aa).

The [4Fe-4S] cluster site is built by Cys68, Cys73, Cys79, Cys94, Cys98, Cys101, and Ser308. In terms of domain architecture, Radical SAM core spans 80-297; it reads FNHGTATFMI…KEIALELGFT (218 aa).

It belongs to the radical SAM superfamily. Lipoyl synthase family. [4Fe-4S] cluster serves as cofactor.

Its subcellular location is the cytoplasm. It catalyses the reaction [[Fe-S] cluster scaffold protein carrying a second [4Fe-4S](2+) cluster] + N(6)-octanoyl-L-lysyl-[protein] + 2 oxidized [2Fe-2S]-[ferredoxin] + 2 S-adenosyl-L-methionine + 4 H(+) = [[Fe-S] cluster scaffold protein] + N(6)-[(R)-dihydrolipoyl]-L-lysyl-[protein] + 4 Fe(3+) + 2 hydrogen sulfide + 2 5'-deoxyadenosine + 2 L-methionine + 2 reduced [2Fe-2S]-[ferredoxin]. Its pathway is protein modification; protein lipoylation via endogenous pathway; protein N(6)-(lipoyl)lysine from octanoyl-[acyl-carrier-protein]: step 2/2. Functionally, catalyzes the radical-mediated insertion of two sulfur atoms into the C-6 and C-8 positions of the octanoyl moiety bound to the lipoyl domains of lipoate-dependent enzymes, thereby converting the octanoylated domains into lipoylated derivatives. The polypeptide is Lipoyl synthase (Vibrio cholerae serotype O1 (strain ATCC 39541 / Classical Ogawa 395 / O395)).